The chain runs to 1589 residues: MSDTNTSIPNTSSAREAGNASQTPSISSSSNTSTTTNTESSSASLSSSPSTSELTSIRPIGIVVAAYDFNYPIKKDSSSQLLSVQQGETIYILNKNSSGWWDGLVIDDSNGKVNRGWFPQNFGRPLRDSHLRKHSHPMKKYSSSKSSRRSSLNSLGNSAYLHVPRNPSKSRRGSSTLSASLSNAHNAETSSGHNNTVSMNNSPFSAPNDASHITPQSSNFNSNASLSQDMTKSADGSSEMNTNAIMNNNETNLQTSGEKAGPPLVAEETIKILPLEEIEMIINGIRSNIASTWSPIPLITKTSDYKLVYYNKDLDIYCSELPLISNSIMESDDICDSEPKFPPNDHLVNLYTRDLRKNANIEDSSTRSKQSESEQNRSSLLMEKQDSKETDGNNNSINDDDNNNENNKNEFNEAGPSSLNSLSAPDLTQNIQSRVVAPSRSSILAKSDIFYHYSRDIKLWTELQDLTVYYTKTAHKMFLKENRLNFTKYFDLISDSIVFTQLGCRLMQHEIKAKSCSKEIKKIFKGLISSLSRISINSHLYFDSAFHRKKMDTMNDKDNDNQENNCSRTEGDDGKIEVDSVHDLVSVPLSGKRNVSTSTTDTLTPMRSSFSTVNENDMENFSVLGPRNSVNSVVTPRTSIQNSTLEDFSPSNKNFKSAKSIYEMVDVEFSKFLRHVQLLYFVLQSSVFSDDNTLPQLLPRFFKGSFSGGSWTNPFSTFITDEFGNATKNKAVTSNEVTASSSKNSSISRIPPKMADAIASASGYSANSETNSQIDLKASSAASGSVFTPFNRPSHNRTFSRARVSKRKKKYPLTVDTLNTMKKKSSQIFEKLNNATGEHLKIISKPKSRIRNLEINSSTYEQINQNVLLLEILENLDLSIFINLKNLIKTPSILLDLESEEFLVHAMSSVSSVLTEFFDIKQAFHDIVIRLIMTTQQTTLDDPYLFSSMRSNFPVGHHEPFKNISNTPLVKGPFHKKNEQLALSLFHVLVSQDVEFNNLEFLNNSDDFKDACEKYVEISNLACIIVDQLIEERENLLNYAARMMKNNLTAELLKGEQEKWFDIYSEDYSDDDSENDEAIIDDELGSEDYIERKAANIEKNLPWFLTSDYETSLVYDSRGKIRGGTKEALIEHLTSHELVDAAFNVTMLITFRSILTTREFFYALIYRYNLYPPEGLSYDDYNIWIEKKSNPIKCRVVNIMRTFLTQYWTRNYYEPGIPLILNFAKMVVSEKIPGAEDLLQKINEKLINENEKEPVDPKQQDSVSAVVQTTKRDNKSPIHMSSSSLPSSASSAFFRLKKLKLLDIDPYTYATQLTVLEHDLYLRITMFECLDRAWGTKYCNMGGSPNITKFIANANTLTNFVSHTIVKQADVKTRSKLTQYFVTVAQHCKELNNFSSMTAIVSALYSSPIYRLKKTWDLVSTESKDLLKNLNNLMDSKRNFVKYRELLRSVTDVACVPFFGVYLSDLTFTFVGNPDFLHNSTNIINFSKRTKIANIVEEIISFKRFHYKLKRLDDIQTVIEASLENVPHIEKQYQLSLQVEPRSGNTKGSTHASSASGTKTAKFLSEFTDDKNGNFLKLGKKKPPSRLFR.

Residues 1–14 (MSDTNTSIPNTSSA) are compositionally biased toward polar residues. Disordered regions lie at residues 1-53 (MSDT…STSE), 121-243 (NFGR…MNTN), 359-424 (ANIE…SLSA), and 553-574 (TMND…GDDG). A compositionally biased stretch (low complexity) spans 20 to 53 (ASQTPSISSSSNTSTTTNTESSSASLSSSPSTSE). Residues 58-128 (RPIGIVVAAY…PQNFGRPLRD (71 aa)) form the SH3 domain. Residues 130-139 (HLRKHSHPMK) are compositionally biased toward basic residues. Over residues 143 to 158 (SSKSSRRSSLNSLGNS) the composition is skewed to low complexity. 2 positions are modified to phosphoserine: serine 151 and serine 154. Polar residues-rich tracts occupy residues 173–205 (GSST…SPFS) and 211–238 (SHIT…DGSS). Residues 359–375 (ANIEDSSTRSKQSESEQ) show a composition bias toward basic and acidic residues. Polar residues predominate over residues 415 to 424 (GPSSLNSLSA). Serine 423 is modified (phosphoserine). Residues serine 580, serine 596, and serine 632 each carry the phosphoserine modification. Position 635 is a phosphothreonine (threonine 635). Residue serine 649 is modified to Phosphoserine. Residues 1117 to 1247 (SRGKIRGGTK…LLQKINEKLI (131 aa)) enclose the N-terminal Ras-GEF domain. The segment covering 1249-1259 (ENEKEPVDPKQ) has biased composition (basic and acidic residues). The disordered stretch occupies residues 1249-1287 (ENEKEPVDPKQQDSVSAVVQTTKRDNKSPIHMSSSSLPS). The segment covering 1260-1269 (QDSVSAVVQT) has biased composition (polar residues). The region spanning 1305–1542 (DPYTYATQLT…YQLSLQVEPR (238 aa)) is the Ras-GEF domain. The helical transmembrane segment at 1452 to 1473 (DVACVPFFGVYLSDLTFTFVGN) threads the bilayer. Residues 1570–1589 (DKNGNFLKLGKKKPPSRLFR) are disordered. Positions 1578–1589 (LGKKKPPSRLFR) are enriched in basic residues.

The protein localises to the membrane. Its function is as follows. Promotes the exchange of Ras-bound GDP by GTP. This protein positively controls the level of cellular cAMP at start, the stage at which the yeast cell division cycle is triggered. This chain is Cell division control protein 25 (CDC25), found in Saccharomyces cerevisiae (strain ATCC 204508 / S288c) (Baker's yeast).